Reading from the N-terminus, the 402-residue chain is Protein FAM221B (402 aa).

The span at 1–35 (MEAHEIIEEPHITMDAEKHPPSKDPSAEDLQENHI) shows a compositional bias: basic and acidic residues. Disordered regions lie at residues 1-205 (MEAH…TARP) and 378-402 (DTQK…HRPL). Polar residues-rich tracts occupy residues 77 to 90 (EPSI…TPTY) and 393 to 402 (DTVSNWHRPL).

This sequence belongs to the FAM221 family.

This is Protein FAM221B (FAM221B) from Homo sapiens (Human).